A 490-amino-acid polypeptide reads, in one-letter code: Bifunctional protein HldE (490 aa).

Residues 1–330 (MERKNVESLF…GSLGFQHGEG (330 aa)) form a ribokinase region. 205–208 (NRKE) lines the ATP pocket. Aspartate 275 is a catalytic residue. Residues 356–490 (FTNGCFDLLH…EKILKAYGEE (135 aa)) form a cytidylyltransferase region.

It in the N-terminal section; belongs to the carbohydrate kinase PfkB family. The protein in the C-terminal section; belongs to the cytidylyltransferase family. Homodimer.

It carries out the reaction D-glycero-beta-D-manno-heptose 7-phosphate + ATP = D-glycero-beta-D-manno-heptose 1,7-bisphosphate + ADP + H(+). The enzyme catalyses D-glycero-beta-D-manno-heptose 1-phosphate + ATP + H(+) = ADP-D-glycero-beta-D-manno-heptose + diphosphate. It functions in the pathway nucleotide-sugar biosynthesis; ADP-L-glycero-beta-D-manno-heptose biosynthesis; ADP-L-glycero-beta-D-manno-heptose from D-glycero-beta-D-manno-heptose 7-phosphate: step 1/4. The protein operates within nucleotide-sugar biosynthesis; ADP-L-glycero-beta-D-manno-heptose biosynthesis; ADP-L-glycero-beta-D-manno-heptose from D-glycero-beta-D-manno-heptose 7-phosphate: step 3/4. Its function is as follows. Catalyzes the phosphorylation of D-glycero-D-manno-heptose 7-phosphate at the C-1 position to selectively form D-glycero-beta-D-manno-heptose-1,7-bisphosphate. Catalyzes the ADP transfer from ATP to D-glycero-beta-D-manno-heptose 1-phosphate, yielding ADP-D-glycero-beta-D-manno-heptose. The polypeptide is Bifunctional protein HldE (Geobacter sulfurreducens (strain ATCC 51573 / DSM 12127 / PCA)).